The following is a 416-amino-acid chain: GTPase Obg (416 aa).

One can recognise an Obg domain in the interval 1–157 (MFQDVLVITV…RRLRLELMLI (157 aa)). Disordered stretches follow at residues 25 to 44 (EKFVPKGGPDGGDGGRGGSV) and 62 to 82 (TYKAEDGEHGRGSQQHGRGGE). Over residues 32–42 (GPDGGDGGRGG) the composition is skewed to gly residues. A compositionally biased stretch (basic and acidic residues) spans 63–72 (YKAEDGEHGR). The OBG-type G domain occupies 158 to 324 (ADVGLVGYPN…LKEALHALVR (167 aa)). GTP is bound by residues 164-171 (GYPNAGKS), 189-193 (FTTLS), 211-214 (DIPG), 277-280 (NKVD), and 305-307 (SAL). 2 residues coordinate Mg(2+): Ser-171 and Thr-191. The 79-residue stretch at 336 to 414 (PRKEVQAGVE…IGGLEFEYIP (79 aa)) folds into the OCT domain.

This sequence belongs to the TRAFAC class OBG-HflX-like GTPase superfamily. OBG GTPase family. Monomer. The cofactor is Mg(2+).

The protein resides in the cytoplasm. In terms of biological role, an essential GTPase which binds GTP, GDP and possibly (p)ppGpp with moderate affinity, with high nucleotide exchange rates and a fairly low GTP hydrolysis rate. Plays a role in control of the cell cycle, stress response, ribosome biogenesis and in those bacteria that undergo differentiation, in morphogenesis control. In Thermus thermophilus (strain ATCC 27634 / DSM 579 / HB8), this protein is GTPase Obg.